The sequence spans 1012 residues: MKTTRRSFLKLVGVSVVGLSLGQLGFDLEDAQAYAVKLKIEGAKEVGTVCPFCSVCCQVIAYVRNGKLVSTEGDPDFPVNEGALCAKGAALFSMYTNPHRLTKPLYRAPHSDKWVEKDWDWTLNQIARRVKDARDKDMILKNDKGQTVNRLESIFMMGTSHASNEECAVIHQAMRGLGVVHMDHQARVUHSPTVAALAESFGRGAMTNHWIDIKNTDAVLIIGSNAAEHHPVAFKWIMRARDNGAVLMHVDPKFSRTSARCDFHVPLRSGTDIAFLGGMVNHIIAKDLYFKDYVANYTNAAFVVGKDYAFEDGIFSGYDPKTRTYDRSKWEFEKGPDGGPVMDPTLKNERCVFNLMKKHYERYTLKNVSDVTGVSEENLLRVYDAFCATGRPDKAGTILYALGWTQHTVGVQNIRTSTLIQLLLGNIGVAGGGINALRGEPNVQGSTDHALLYHILPGYNAMPVAQWQTLADYNKANTPVTTLKNSANWWSNRPKYVASLLKGWFGDAATPENDFCYEYLPKLEKGEDYSYMYVMDRMYHGKLKGGFIFGVNPMNSFPNTNKMRAALDKLDWLVCSELHNSETTDNWKRPGVDPKACKTEVFLLPSAHRVEKAGTISNSGRWLQWFDKAVEPGQARNFADIFVPLVNKIRALYKAEGGTLPDPVLKLHWTDKFDPEEWTRRINGFFWADTKVGDKEYKRGQLVPAFGQLKDDGSTSSLNWLYTGSYTEEDGNKSKRRDARQTPMQANIGLFPNWSWCWPVNRRILYNRASVDVNGKPWNPKKAVIEWDGAKWVGDVPDGPWPPMADKEKGKLPFIMNKDGFAQFYGTGRMDGPFPEHYEPAETPLDSHPFSKQLSSPVYKFHTSDMDQIAKAADPKYPIVLTTYSLTEHWCGGGETRNVPNLLETEPQLYIEMSPELAEEKGIKNGDGVIVESIRGRAEAIAMVTVRIRPFTVMGKTVHLVGMPFAYGWTTPKCGDSTNRLTVGAYDPNTTIPESKACLVNVRKADKLTEIA.

Residues 1 to 33 (MKTTRRSFLKLVGVSVVGLSLGQLGFDLEDAQA) constitute a signal peptide (tat-type signal). Residues 43 to 99 (AKEVGTVCPFCSVCCQVIAYVRNGKLVSTEGDPDFPVNEGALCAKGAALFSMYTNPH) enclose the 4Fe-4S Mo/W bis-MGD-type domain. Residues Cys-50, Cys-53, Cys-57, and Cys-85 each contribute to the [4Fe-4S] cluster site. Residue Sec-189 participates in W-bis(molybdopterin guanine dinucleotide) binding. Residue Sec-189 is a non-standard amino acid, selenocysteine. Residues Thr-389, Arg-391, Lys-394, Leu-424, and Asn-426 each coordinate Ca(2+).

It belongs to the prokaryotic molybdopterin-containing oxidoreductase family. As to quaternary structure, heterotrimer of cytochrome c3 FDH2C and formate dehydrogenase FDH2 alpha and beta subunits that forms the FdhABC(3) complex. It depends on [4Fe-4S] cluster as a cofactor. Requires W-bis(molybdopterin guanine dinucleotide) as cofactor. Predicted to be exported by the Tat system. The position of the signal peptide cleavage has not been experimentally proven.

The protein resides in the periplasm. The enzyme catalyses 2 Fe(III)-[cytochrome c553] + formate = 2 Fe(II)-[cytochrome c553] + CO2 + H(+). Functionally, alpha chain of the formate dehydrogenase (FDH) that catalyzes the reversible two-electron oxidation of formate to carbon dioxide. The alpha subunit of formate dehydrogenase forms the active site. The chain is Formate dehydrogenase 2 subunit alpha (cytochrome c-553) from Nitratidesulfovibrio vulgaris (strain ATCC 29579 / DSM 644 / CCUG 34227 / NCIMB 8303 / VKM B-1760 / Hildenborough) (Desulfovibrio vulgaris).